A 216-amino-acid polypeptide reads, in one-letter code: Small ribosomal subunit protein uS3c (216 aa).

Positions 39–109 (IRSYINRELE…SIRINVIELT (71 aa)) constitute a KH type-2 domain.

Belongs to the universal ribosomal protein uS3 family. Part of the 30S ribosomal subunit.

The protein localises to the plastid. The protein resides in the chloroplast. This Guillardia theta (Cryptophyte) protein is Small ribosomal subunit protein uS3c (rps3).